The following is a 147-amino-acid chain: D-aminoacyl-tRNA deacylase (147 aa).

A Gly-cisPro motif, important for rejection of L-amino acids motif is present at residues 137 to 138 (GP).

It belongs to the DTD family. In terms of assembly, homodimer.

The protein resides in the cytoplasm. The enzyme catalyses glycyl-tRNA(Ala) + H2O = tRNA(Ala) + glycine + H(+). It carries out the reaction a D-aminoacyl-tRNA + H2O = a tRNA + a D-alpha-amino acid + H(+). In terms of biological role, an aminoacyl-tRNA editing enzyme that deacylates mischarged D-aminoacyl-tRNAs. Also deacylates mischarged glycyl-tRNA(Ala), protecting cells against glycine mischarging by AlaRS. Acts via tRNA-based rather than protein-based catalysis; rejects L-amino acids rather than detecting D-amino acids in the active site. By recycling D-aminoacyl-tRNA to D-amino acids and free tRNA molecules, this enzyme counteracts the toxicity associated with the formation of D-aminoacyl-tRNA entities in vivo and helps enforce protein L-homochirality. This Acinetobacter baumannii (strain ACICU) protein is D-aminoacyl-tRNA deacylase.